Reading from the N-terminus, the 142-residue chain is Small ribosomal subunit protein bS6 (142 aa).

The tract at residues 103–142 is disordered; the sequence is KAAESREQRAPRGEDRPARVVADDVDDSDDDTDDEDSNDE. Basic and acidic residues predominate over residues 105 to 124; sequence AESREQRAPRGEDRPARVVA. The span at 125–142 shows a compositional bias: acidic residues; sequence DDVDDSDDDTDDEDSNDE.

The protein belongs to the bacterial ribosomal protein bS6 family.

Functionally, binds together with bS18 to 16S ribosomal RNA. This is Small ribosomal subunit protein bS6 from Hahella chejuensis (strain KCTC 2396).